The following is a 388-amino-acid chain: Probable aspartic-type endopeptidase MCYG_06955 (388 aa).

An N-terminal signal peptide occupies residues 1-21 (MMGPFFYFTAYVSLLFAFTQA). N-linked (GlcNAc...) asparagine glycosylation is found at Asn-82 and Asn-104. Residues 96–384 (FVNEITVGND…DYDGPKIGFA (289 aa)) form the Peptidase A1 domain. The active site involves Asp-112. N-linked (GlcNAc...) asparagine glycosylation is found at Asn-209 and Asn-261. Asp-278 is a catalytic residue. Residues Asn-315 and Asn-320 are each glycosylated (N-linked (GlcNAc...) asparagine).

The protein belongs to the peptidase A1 family.

Its subcellular location is the secreted. In terms of biological role, probable aspartic-type endopeptidase which contributes to virulence. This Arthroderma otae (strain ATCC MYA-4605 / CBS 113480) (Microsporum canis) protein is Probable aspartic-type endopeptidase MCYG_06955.